We begin with the raw amino-acid sequence, 406 residues long: Luteothin monooxygenase (406 aa).

Residues His-98, Arg-102, Arg-296, Gly-350, His-353, and Cys-355 each contribute to the heme b site.

Belongs to the cytochrome P450 family. As to quaternary structure, monomer. Heme b is required as a cofactor.

It catalyses the reaction luteothin + 4 reduced [2Fe-2S]-[ferredoxin] + 2 O2 + 4 H(+) = aureothin + 4 oxidized [2Fe-2S]-[ferredoxin] + 3 H2O. The protein operates within antibiotic biosynthesis. Its pathway is polyketide biosynthesis. In terms of biological role, bifunctional cytochrome P450 protein involved in the biosynthesis of the antibiotic aureothin, a nitroaryl polyketide metabolite with antifungal, cytotoxic and insecticidal activities. Catalyzes the hydroxylation of luteothin (also called deoxyaureothin), leading to the formation of the intermediate (7R)-7-hydroxydeoxyaureothin, followed by the formation of the aureothin tetrahydrofuran ring, the final step in the biosynthesis of aureothin. This is Luteothin monooxygenase from Streptomyces thioluteus.